The primary structure comprises 140 residues: Putative nickel-responsive regulator (140 aa).

Residues histidine 81, histidine 92, histidine 94, and cysteine 100 each coordinate Ni(2+).

Belongs to the transcriptional regulatory CopG/NikR family. Ni(2+) serves as cofactor.

In terms of biological role, transcriptional regulator. In Methanocella arvoryzae (strain DSM 22066 / NBRC 105507 / MRE50), this protein is Putative nickel-responsive regulator.